A 78-amino-acid polypeptide reads, in one-letter code: DNA-directed RNA polymerase subunit Rpo5 (78 aa).

Belongs to the archaeal Rpo5/eukaryotic RPB5 RNA polymerase subunit family. In terms of assembly, part of the RNA polymerase complex.

Its subcellular location is the cytoplasm. It carries out the reaction RNA(n) + a ribonucleoside 5'-triphosphate = RNA(n+1) + diphosphate. Its function is as follows. DNA-dependent RNA polymerase (RNAP) catalyzes the transcription of DNA into RNA using the four ribonucleoside triphosphates as substrates. The protein is DNA-directed RNA polymerase subunit Rpo5 of Methanococcus maripaludis (strain C7 / ATCC BAA-1331).